The sequence spans 395 residues: Dihydrolipoyllysine-residue succinyltransferase component of 2-oxoglutarate dehydrogenase complex (395 aa).

Residues 2 to 77 (RVKIIVPSLG…AVGEEIGEIN (76 aa)) enclose the Lipoyl-binding domain. K43 carries the post-translational modification N6-lipoyllysine. The Peripheral subunit-binding (PSBD) domain occupies 111-148 (TLAPSVQKLVTENKLDPNNIKGTGRDGRITKGDVLATI). Active-site residues include H366 and D370.

Belongs to the 2-oxoacid dehydrogenase family. In terms of assembly, forms a 24-polypeptide structural core with octahedral symmetry. Part of the 2-oxoglutarate dehydrogenase (OGDH) complex composed of E1 (2-oxoglutarate dehydrogenase), E2 (dihydrolipoamide succinyltransferase) and E3 (dihydrolipoamide dehydrogenase); the complex contains multiple copies of the three enzymatic components (E1, E2 and E3). The cofactor is (R)-lipoate.

The catalysed reaction is N(6)-[(R)-dihydrolipoyl]-L-lysyl-[protein] + succinyl-CoA = N(6)-[(R)-S(8)-succinyldihydrolipoyl]-L-lysyl-[protein] + CoA. It functions in the pathway amino-acid degradation; L-lysine degradation via saccharopine pathway; glutaryl-CoA from L-lysine: step 6/6. E2 component of the 2-oxoglutarate dehydrogenase (OGDH) complex which catalyzes the second step in the conversion of 2-oxoglutarate to succinyl-CoA and CO(2). The polypeptide is Dihydrolipoyllysine-residue succinyltransferase component of 2-oxoglutarate dehydrogenase complex (sucB) (Rickettsia conorii (strain ATCC VR-613 / Malish 7)).